The following is a 336-amino-acid chain: Dual specificity mitogen-activated protein kinase kinase sek-1 (336 aa).

A Protein kinase domain is found at Leu50–Met311. Residues Leu56–Val64 and Lys79 contribute to the ATP site. The Proton acceptor role is filled by Asp176. Phosphoserine is present on Ser204. Thr208 is subject to Phosphothreonine.

It belongs to the protein kinase superfamily. STE Ser/Thr protein kinase family. MAP kinase kinase subfamily. As to quaternary structure, interacts with nsy-1. Interacts with unc-16. Mg(2+) serves as cofactor. In terms of tissue distribution, expressed in linker cell in males.

It carries out the reaction L-seryl-[protein] + ATP = O-phospho-L-seryl-[protein] + ADP + H(+). The enzyme catalyses L-threonyl-[protein] + ATP = O-phospho-L-threonyl-[protein] + ADP + H(+). It catalyses the reaction L-tyrosyl-[protein] + ATP = O-phospho-L-tyrosyl-[protein] + ADP + H(+). Activated by nsy-1-mediated phosphorylation. In terms of biological role, dual specificity protein kinase which acts as an essential component of the p38 signal transduction pathway which is also composed of upstream effector nsy-1 and downstream effector pmk-1. May phosphorylate pmk-1. Downstream of CaMKII unc-43 and adapter protein tir-1, plays a role in determining asymmetric cell fates in olfactory AWC neurons during neuronal development. Activation results in the repression of odorant receptor str-2 expression in one of the 2 AWC neurons. Involved in resistance to pathogenic Gram-positive and Gram-negative bacterial and fungal infection. Involved in resistance to the nematotoxic C.cinerea galectin Cgl2. Probably by promoting pmk-1-mediated activation of skn-1, involved in the up-regulation of gcs-1 and glutathione-S-transferase gst-4 expression upon bacterial infection. Probably downstream of tir-1, required for the expression of antimicrobial peptide nlp-29 in the epidermis in response to fungal infection or physical injury. Regulates susceptibility of B.thuringiensis pore-forming toxin Cry5B and Cry21A. Involved in the response to oxidative stress. May regulate transcription factor daf-16 localization during oxidative stress. By phosphorylating pmk-1, regulates skn-1 localization during oxidative stress. By phosphorylating and activating pmk-1, plays a role in the stabilization of transcription factor rnt-1 in the intestine during oxidative stress. Up-regulates expression of gcs-1 in intestine upon arsenite treatment. Regulates germline proliferation in response to osmotic stress, starvation and germline apoptosis induced by heavy metals, such as Cu(2+). In association with mek-1, regulates germline cell apoptosis in response to oxidative, osmotic and heat shock stresses. Plays a role downstream of tir-1/nsy-1 in regulating susceptibility to anoxia. In males, by regulating pqn-41 expression, involved in non-apoptotic death of the linker cell which guides gonad elongation during larval development. Involved in egg laying. This chain is Dual specificity mitogen-activated protein kinase kinase sek-1, found in Caenorhabditis elegans.